The following is a 335-amino-acid chain: Holliday junction branch migration complex subunit RuvB (335 aa).

Positions 1–183 (MDERIISSET…FGVIDHLEFY (183 aa)) are large ATPase domain (RuvB-L). Residues Leu-22, Arg-23, Gly-64, Lys-67, Thr-68, Thr-69, 130–132 (EDY), Arg-173, Tyr-183, and Arg-220 contribute to the ATP site. Position 68 (Thr-68) interacts with Mg(2+). The segment at 184–254 (TEEQLTEIVL…LAKEALTLLQ (71 aa)) is small ATPAse domain (RuvB-S). A head domain (RuvB-H) region spans residues 257-335 (PRGLDTIDQK…HLGISYEKEV (79 aa)). Residues Arg-293, Arg-312, and Arg-317 each contribute to the DNA site.

This sequence belongs to the RuvB family. As to quaternary structure, homohexamer. Forms an RuvA(8)-RuvB(12)-Holliday junction (HJ) complex. HJ DNA is sandwiched between 2 RuvA tetramers; dsDNA enters through RuvA and exits via RuvB. An RuvB hexamer assembles on each DNA strand where it exits the tetramer. Each RuvB hexamer is contacted by two RuvA subunits (via domain III) on 2 adjacent RuvB subunits; this complex drives branch migration. In the full resolvosome a probable DNA-RuvA(4)-RuvB(12)-RuvC(2) complex forms which resolves the HJ.

Its subcellular location is the cytoplasm. It catalyses the reaction ATP + H2O = ADP + phosphate + H(+). Functionally, the RuvA-RuvB-RuvC complex processes Holliday junction (HJ) DNA during genetic recombination and DNA repair, while the RuvA-RuvB complex plays an important role in the rescue of blocked DNA replication forks via replication fork reversal (RFR). RuvA specifically binds to HJ cruciform DNA, conferring on it an open structure. The RuvB hexamer acts as an ATP-dependent pump, pulling dsDNA into and through the RuvAB complex. RuvB forms 2 homohexamers on either side of HJ DNA bound by 1 or 2 RuvA tetramers; 4 subunits per hexamer contact DNA at a time. Coordinated motions by a converter formed by DNA-disengaged RuvB subunits stimulates ATP hydrolysis and nucleotide exchange. Immobilization of the converter enables RuvB to convert the ATP-contained energy into a lever motion, pulling 2 nucleotides of DNA out of the RuvA tetramer per ATP hydrolyzed, thus driving DNA branch migration. The RuvB motors rotate together with the DNA substrate, which together with the progressing nucleotide cycle form the mechanistic basis for DNA recombination by continuous HJ branch migration. Branch migration allows RuvC to scan DNA until it finds its consensus sequence, where it cleaves and resolves cruciform DNA. In Listeria monocytogenes serotype 4b (strain CLIP80459), this protein is Holliday junction branch migration complex subunit RuvB.